The primary structure comprises 412 residues: uncharacterized protein (412 aa).

The 215-residue stretch at 50 to 264 folds into the Radical SAM core domain; sequence EVDIRTAYIN…KSGRRIVIGD (215 aa). Residues C64, C68, and C71 each contribute to the [4Fe-4S] cluster site.

Belongs to the radical SAM superfamily. Anaerobic sulfatase-maturating enzyme family. It depends on [4Fe-4S] cluster as a cofactor.

This is an uncharacterized protein from Archaeoglobus fulgidus (strain ATCC 49558 / DSM 4304 / JCM 9628 / NBRC 100126 / VC-16).